The primary structure comprises 531 residues: Cytosolic Fe-S cluster assembly factor NAR1 (531 aa).

The [4Fe-4S] cluster site is built by Cys20, Cys72, Cys75, Cys78, Cys184, and Cys239. A disordered region spans residues 395–426 (TSSTTTTKTNPLVARRKARLSSKRSESGAQDV). [4Fe-4S] cluster is bound by residues Cys442 and Cys446.

Belongs to the NARF family.

In terms of biological role, component of the cytosolic Fe/S protein assembly machinery. Required for maturation of extramitochondrial Fe/S proteins. May play a role in the transfer of pre-assembled Fe/S clusters to target apoproteins. The sequence is that of Cytosolic Fe-S cluster assembly factor NAR1 (NAR1) from Meyerozyma guilliermondii (strain ATCC 6260 / CBS 566 / DSM 6381 / JCM 1539 / NBRC 10279 / NRRL Y-324) (Yeast).